Here is a 155-residue protein sequence, read N- to C-terminus: MNPELSLSVQYGVAEPRLPRWRLRRWAQRALDGAARDGLAECARAELSLRLVGQAEGRRLNHAYRERDYATNVLTFEYGTDPLGTARGDIVICVPVLAREAREQGKTLLDHAAHLTVHGVLHALGYDHIKARDARRMEALETAILTGMRIADPYA.

The Zn(2+) site is built by histidine 118, histidine 122, and histidine 128.

It belongs to the endoribonuclease YbeY family. It depends on Zn(2+) as a cofactor.

The protein resides in the cytoplasm. Functionally, single strand-specific metallo-endoribonuclease involved in late-stage 70S ribosome quality control and in maturation of the 3' terminus of the 16S rRNA. The polypeptide is Endoribonuclease YbeY (Bordetella petrii (strain ATCC BAA-461 / DSM 12804 / CCUG 43448)).